The following is a 318-amino-acid chain: Transaldolase (318 aa).

Residue Lys-131 is the Schiff-base intermediate with substrate of the active site.

It belongs to the transaldolase family. Type 1 subfamily. As to quaternary structure, homodimer.

It is found in the cytoplasm. It carries out the reaction D-sedoheptulose 7-phosphate + D-glyceraldehyde 3-phosphate = D-erythrose 4-phosphate + beta-D-fructose 6-phosphate. The protein operates within carbohydrate degradation; pentose phosphate pathway; D-glyceraldehyde 3-phosphate and beta-D-fructose 6-phosphate from D-ribose 5-phosphate and D-xylulose 5-phosphate (non-oxidative stage): step 2/3. Its function is as follows. Transaldolase is important for the balance of metabolites in the pentose-phosphate pathway. The protein is Transaldolase of Buchnera aphidicola subsp. Cinara cedri (strain Cc).